Reading from the N-terminus, the 464-residue chain is UDP-glucose:undecaprenyl-phosphate glucose-1-phosphate transferase (464 aa).

Over 1 to 15 (MTNLKKRERAKTNAS) the chain is Cytoplasmic. Residues 16 to 36 (LISMVQRFSDITIMFAGLWLV) form a helical membrane-spanning segment. At 37 to 38 (CE) the chain is on the periplasmic side. Residues 39–59 (VSGLSFLYMHLLVALITLVVF) form a helical membrane-spanning segment. Over 60–80 (QMLGGITDFYRSWRGVRAATE) the chain is Cytoplasmic. Residues 81–101 (FALLLQNWTLSVIFSAGLVAF) form a helical membrane-spanning segment. Topologically, residues 102 to 104 (NND) are periplasmic. The helical transmembrane segment at 105–125 (FDTQLKIWLAWYALTSIGLVV) threads the bilayer. At 126-278 (CRSCIRIGAG…VNRLLKRAED (153 aa)) the chain is on the cytoplasmic side. Residues 279–299 (IVLATLILLLISPVLCCIALA) form a helical membrane-spanning segment. Residues 300 to 464 (VKLSSPGPVI…FKGFVNKAAY (165 aa)) lie on the Periplasmic side of the membrane.

The protein belongs to the bacterial sugar transferase family.

The protein localises to the cell inner membrane. The catalysed reaction is di-trans,octa-cis-undecaprenyl phosphate + UDP-alpha-D-glucose = alpha-D-glucosyl di-trans,octa-cis-undecaprenyl diphosphate + UMP. The protein operates within exopolysaccharide biosynthesis; colanic acid biosynthesis. In terms of biological role, is the initiating enzyme for colanic acid (CA) synthesis. Catalyzes the transfer of the glucose-1-phosphate moiety from UDP-Glc onto the carrier lipid undecaprenyl phosphate (C55-P), forming a phosphoanhydride bond yielding to glucosyl-pyrophosphoryl-undecaprenol (Glc-PP-C55). Also possesses a weak galactose-1-P transferase activity. In Escherichia coli (strain K12), this protein is UDP-glucose:undecaprenyl-phosphate glucose-1-phosphate transferase (wcaJ).